The following is a 469-amino-acid chain: Glutamine synthetase (469 aa).

Positions 14–98 (NDVKYVDLRF…ITCDVLEPTT (85 aa)) constitute a GS beta-grasp domain. The GS catalytic domain maps to 106 to 469 (PRGIAKKAEA…PVEFDMYYSG (364 aa)). The Mg(2+) site is built by glutamate 131 and glutamate 133. ATP is bound at residue glutamate 209. Positions 214 and 221 each coordinate Mg(2+). L-glutamate-binding positions include 265 to 266 (NG) and glycine 266. Histidine 270 contacts Mg(2+). ATP contacts are provided by residues 272 to 274 (HQS) and serine 274. L-glutamate is bound by residues arginine 322, glutamate 328, and arginine 340. The ATP site is built by arginine 340, arginine 345, and lysine 353. A Mg(2+)-binding site is contributed by glutamate 358. Arginine 360 serves as a coordination point for L-glutamate. An O-AMP-tyrosine modification is found at tyrosine 398.

It belongs to the glutamine synthetase family. As to quaternary structure, oligomer of 12 subunits arranged in the form of two hexameric ring. Mg(2+) is required as a cofactor.

The protein resides in the cytoplasm. The catalysed reaction is L-glutamate + NH4(+) + ATP = L-glutamine + ADP + phosphate + H(+). The activity of this enzyme could be controlled by adenylation under conditions of abundant glutamine. In terms of biological role, catalyzes the ATP-dependent biosynthesis of glutamine from glutamate and ammonia. This chain is Glutamine synthetase, found in Bradyrhizobium diazoefficiens (strain JCM 10833 / BCRC 13528 / IAM 13628 / NBRC 14792 / USDA 110).